The primary structure comprises 178 residues: Probable chorismate pyruvate-lyase (178 aa).

Residues Arg-72, Leu-110, and Glu-169 each coordinate substrate.

Belongs to the UbiC family.

The protein localises to the cytoplasm. The enzyme catalyses chorismate = 4-hydroxybenzoate + pyruvate. The protein operates within cofactor biosynthesis; ubiquinone biosynthesis. In terms of biological role, removes the pyruvyl group from chorismate, with concomitant aromatization of the ring, to provide 4-hydroxybenzoate (4HB) for the ubiquinone pathway. This Nitrosomonas europaea (strain ATCC 19718 / CIP 103999 / KCTC 2705 / NBRC 14298) protein is Probable chorismate pyruvate-lyase.